We begin with the raw amino-acid sequence, 264 residues long: Thymidylate synthase (264 aa).

DUMP is bound at residue Arg21. His51 is a (6R)-5,10-methylene-5,6,7,8-tetrahydrofolate binding site. 126–127 (RR) serves as a coordination point for dUMP. Catalysis depends on Cys146, which acts as the Nucleophile. Residues 166 to 169 (RSAD), Asn177, and 207 to 209 (HLY) contribute to the dUMP site. Asp169 lines the (6R)-5,10-methylene-5,6,7,8-tetrahydrofolate pocket. Ser263 is a (6R)-5,10-methylene-5,6,7,8-tetrahydrofolate binding site.

Belongs to the thymidylate synthase family. Bacterial-type ThyA subfamily. In terms of assembly, homodimer.

Its subcellular location is the cytoplasm. It carries out the reaction dUMP + (6R)-5,10-methylene-5,6,7,8-tetrahydrofolate = 7,8-dihydrofolate + dTMP. It participates in pyrimidine metabolism; dTTP biosynthesis. In terms of biological role, catalyzes the reductive methylation of 2'-deoxyuridine-5'-monophosphate (dUMP) to 2'-deoxythymidine-5'-monophosphate (dTMP) while utilizing 5,10-methylenetetrahydrofolate (mTHF) as the methyl donor and reductant in the reaction, yielding dihydrofolate (DHF) as a by-product. This enzymatic reaction provides an intracellular de novo source of dTMP, an essential precursor for DNA biosynthesis. This is Thymidylate synthase from Shouchella clausii (strain KSM-K16) (Alkalihalobacillus clausii).